Consider the following 667-residue polypeptide: Serine/threonine-protein kinase BUR1 (667 aa).

In terms of domain architecture, Protein kinase spans 60–378 (YKEEEKLGQG…AMSAMKHPFF (319 aa)). ATP contacts are provided by residues 66-74 (LGQGTFGEV) and lysine 89. Catalysis depends on aspartate 207, which acts as the Proton acceptor. Residues 408 to 667 (HEAMSQKGPS…SEQKDIADLY (260 aa)) form a disordered region. A compositionally biased stretch (basic and acidic residues) spans 432–443 (KFEKKSGIKREQ). The span at 494 to 516 (NNHSGSLRNRITPSNMGTHSNPR) shows a compositional bias: polar residues. Residues 541 to 556 (YNRGYSSSVNSRYNNR) show a composition bias toward low complexity. 3 stretches are compositionally biased toward polar residues: residues 582–594 (DNNQ…QGHS), 602–611 (SKYNSTQTNI), and 622–632 (NEYNASKLGSQ). The span at 633-667 (DTKKNDYPKHSETQKQQNNEEKKIHSEQKDIADLY) shows a compositional bias: basic and acidic residues.

It belongs to the protein kinase superfamily. CMGC Ser/Thr protein kinase family. CDC2/CDKX subfamily.

Its subcellular location is the nucleus. It carries out the reaction L-seryl-[protein] + ATP = O-phospho-L-seryl-[protein] + ADP + H(+). The enzyme catalyses L-threonyl-[protein] + ATP = O-phospho-L-threonyl-[protein] + ADP + H(+). The catalysed reaction is [DNA-directed RNA polymerase] + ATP = phospho-[DNA-directed RNA polymerase] + ADP + H(+). Its function is as follows. Serine/threonine-protein kinase involved in transcription regulation. Phosphorylates the UBC2/RAD6 ubiquitin-conjugating enzyme (E2), leading to monoubiquitination of histone H2B and the silencing of telomeric-associated genes. Also required for histone H3 methylation. Necessary for the recovery from pheromone-induced growth arrest in the cell cycle G1 phase. In Candida glabrata (strain ATCC 2001 / BCRC 20586 / JCM 3761 / NBRC 0622 / NRRL Y-65 / CBS 138) (Yeast), this protein is Serine/threonine-protein kinase BUR1 (BUR1).